Consider the following 511-residue polypeptide: Gap junction alpha-3 protein (511 aa).

The stretch at 2–15 (GDWSFLGRLLENAQ) is an intramembrane region. Residues 16–19 (EHST) are Cytoplasmic-facing. Residues 20-40 (VIGKVWLTVLFIFRILVLGAA) form a helical membrane-spanning segment. Residues 41–71 (AEEVWGDEQSDFTCNTQQPGCENVCYDKAFP) are Extracellular-facing. 3 cysteine pairs are disulfide-bonded: C54-C214, C61-C208, and C65-C203. The chain crosses the membrane as a helical span at residues 72–92 (ISHIRFWVLQIIFVSTPTLIY). Over 93–174 (LGHVLHIVRM…GALLRTYIFN (82 aa)) the chain is Cytoplasmic. Over residues 110 to 119 (EEELKKRGSV) the composition is skewed to basic and acidic residues. The segment at 110–143 (EEELKKRGSVKDNNYPGAATSGGGSGGGNNFKDP) is disordered. The segment covering 129–138 (TSGGGSGGGN) has biased composition (gly residues). Residues 175-195 (IIFKTLFEVGFIVGQYFLYGF) form a helical membrane-spanning segment. At 196–223 (ELKPVYQCSRPPCPHTVDCFISRPTEKT) the chain is on the extracellular side. Residues 224–244 (IFIIFMLVVASVSLLLNMLEI) traverse the membrane as a helical segment. Residues 245-511 (YHLGWKKLKQ…SRARSDDLAV (267 aa)) are Cytoplasmic-facing. Residues 397-511 (AEQQGKAPSS…SRARSDDLAV (115 aa)) form a disordered region. Low complexity-rich tracts occupy residues 403-415 (APSS…TPSS) and 440-456 (TTTN…ASGS).

It belongs to the connexin family. In terms of assembly, a hemichannel or connexon is composed of a hexamer of connexins. A functional gap junction is formed by the apposition of two hemichannels. During early stages of lens development, interacts with the C-terminus of MIP. As to expression, detected in eye lens.

It is found in the cell membrane. It localises to the cell junction. The protein resides in the gap junction. Its function is as follows. Structural component of lens fiber gap junctions. Gap junctions are dodecameric channels that connect the cytoplasm of adjoining cells. They are formed by the docking of two hexameric hemichannels, one from each cell membrane. Small molecules and ions diffuse from one cell to a neighboring cell via the central pore. The polypeptide is Gap junction alpha-3 protein (GJA3) (Gallus gallus (Chicken)).